Here is a 311-residue protein sequence, read N- to C-terminus: Aspartate carbamoyltransferase catalytic subunit (311 aa).

Carbamoyl phosphate contacts are provided by Arg-55 and Thr-56. Residue Lys-85 participates in L-aspartate binding. Residues Arg-106, His-135, and Gln-138 each contribute to the carbamoyl phosphate site. Residues Arg-168 and Arg-230 each contribute to the L-aspartate site. 2 residues coordinate carbamoyl phosphate: Leu-268 and Pro-269.

This sequence belongs to the aspartate/ornithine carbamoyltransferase superfamily. ATCase family. Heterododecamer (2C3:3R2) of six catalytic PyrB chains organized as two trimers (C3), and six regulatory PyrI chains organized as three dimers (R2).

The catalysed reaction is carbamoyl phosphate + L-aspartate = N-carbamoyl-L-aspartate + phosphate + H(+). It participates in pyrimidine metabolism; UMP biosynthesis via de novo pathway; (S)-dihydroorotate from bicarbonate: step 2/3. Its function is as follows. Catalyzes the condensation of carbamoyl phosphate and aspartate to form carbamoyl aspartate and inorganic phosphate, the committed step in the de novo pyrimidine nucleotide biosynthesis pathway. The polypeptide is Aspartate carbamoyltransferase catalytic subunit (Salmonella paratyphi C (strain RKS4594)).